Reading from the N-terminus, the 500-residue chain is Potassium voltage-gated channel subfamily V member 1 (500 aa).

The Cytoplasmic segment spans residues 1–210 (MPSSGRALLD…EKPGSSTAAR (210 aa)). A compositionally biased stretch (basic and acidic residues) spans 168-181 (KKDTEDQESQHESE). The interval 168 to 189 (KKDTEDQESQHESEQDFSQGPC) is disordered. Residues 211–231 (IFGVISIIFVVVSIINMALMS) form a helical membrane-spanning segment. At 232-238 (AELSWLD) the chain is on the extracellular side. The helical transmembrane segment at 239-259 (LQLLEILEYVCISWFTGEFVL) threads the bilayer. Residues 260-276 (RFLCVRDRCRFLRKVPN) lie on the Cytoplasmic side of the membrane. Residues 277–297 (IIDLLAILPFYITLLVESLSG) traverse the membrane as a helical segment. The Extracellular portion of the chain corresponds to 298-309 (SQTTQELENVGR). Residues 310 to 331 (IVQVLRLLRALRMLKLGRHSTG) traverse the membrane as a helical; Voltage-sensor segment. Over 332 to 345 (LRSLGMTITQCYEE) the chain is Cytoplasmic. Residues 346-366 (VGLLLLFLSVGISIFSTVEYF) form a helical membrane-spanning segment. The Selectivity filter motif lies at 392 to 397 (TVGYGD). The chain crosses the membrane as a helical span at residues 407 to 427 (IVAFMCILSGILVLALPIAII). Topologically, residues 428–500 (NDRFSACYFT…RSSGGDDFWF (73 aa)) are cytoplasmic.

This sequence belongs to the potassium channel family. V (TC 1.A.1.2) subfamily. Kv8.1/KCNV1 sub-subfamily. Heteromultimer with KCNB1 and KCNB2. Interacts with KCNC4 and KCND1. In terms of tissue distribution, detected in brain.

It is found in the cell membrane. In terms of biological role, potassium channel subunit that does not form functional channels by itself. Modulates KCNB1 and KCNB2 channel activity by shifting the threshold for inactivation to more negative values and by slowing the rate of inactivation. Can down-regulate the channel activity of KCNB1, KCNB2, KCNC4 and KCND1, possibly by trapping them in intracellular membranes. The polypeptide is Potassium voltage-gated channel subfamily V member 1 (KCNV1) (Homo sapiens (Human)).